A 430-amino-acid polypeptide reads, in one-letter code: Cholecystokinin receptor type A (430 aa).

The Extracellular segment spans residues Met-1–Pro-41. Asn-10, Asn-13, and Asn-24 each carry an N-linked (GlcNAc...) asparagine glycan. Residues Cys-18 and Cys-29 are joined by a disulfide bond. The chain crosses the membrane as a helical span at residues Ala-42–Ile-67. The Cytoplasmic segment spans residues Arg-68–Asn-77. Residues Ile-78 to Leu-104 form a helical membrane-spanning segment. At Lys-105–Lys-115 the chain is on the extracellular side. Cys-114 and Cys-196 are oxidised to a cystine. A helical membrane pass occupies residues Thr-116–Leu-137. Over Glu-138–His-157 the chain is Cytoplasmic. A helical membrane pass occupies residues Ala-158 to Ile-178. Residues Tyr-179–His-210 lie on the Extracellular side of the membrane. Asn-190 is a glycosylation site (N-linked (GlcNAc...) asparagine). The helical transmembrane segment at Thr-211–Leu-234 threads the bilayer. The Cytoplasmic segment spans residues Glu-235–Arg-315. A helical transmembrane segment spans residues Met-316 to Ala-336. The Extracellular segment spans residues Trp-337–Gly-351. Residues Thr-352–Met-375 traverse the membrane as a helical segment. Over Asn-376 to Pro-430 the chain is Cytoplasmic. The S-palmitoyl cysteine moiety is linked to residue Cys-389. The interval Pro-396 to Pro-430 is disordered. Positions Ala-413–Pro-430 are enriched in polar residues.

It belongs to the G-protein coupled receptor 1 family.

The protein localises to the cell membrane. Functionally, receptor for cholecystokinin. Mediates pancreatic growth and enzyme secretion, smooth muscle contraction of the gall bladder and stomach. Has a 1000-fold higher affinity for CCK rather than for gastrin. It modulates feeding and dopamine-induced behavior in the central and peripheral nervous system. This receptor mediates its action by association with G proteins that activate a phosphatidylinositol-calcium second messenger system. The sequence is that of Cholecystokinin receptor type A (CCKAR) from Cavia porcellus (Guinea pig).